Here is a 391-residue protein sequence, read N- to C-terminus: Paired box protein Pax-5 (391 aa).

Residues 1 to 21 (MDLEKNYPTPRTSRTGHGGVN) form a disordered region. The paired DNA-binding region spans 16-142 (GHGGVNQLGG…SSINRIIRTK (127 aa)). Positions 19–75 (GVNQLGGVFVNGRPLPDVVRQRIVELAHQGVRPCDISRQLRVSHGCVSKILGRYYET) are PAI subdomain. The tract at residues 94–142 (KVVEKIAEYKRQNPTMFAWEIRDRLLAERVCDNDTVPSVSSINRIIRTK) is RED subdomain. Residues 182-218 (SGILGITSPSADTNKRKRDEGIQESPVPNGHSLPGRD) are disordered.

In terms of assembly, interacts with ETS1; this interaction alters PAX5 DNA-binding properties. Binds DNA as a monomer. Interacts with TBP; this interaction allows PAX5 to interact with the basal transcription machinery. Interacts with RB1. Interacts with TLE4. Interacts with DAXX. As to quaternary structure, (Microbial infection) Interacts (via N-terminus) with Epstein-Barr virus protein BZLF1 (via C-terminus); this interaction inhibits BZLF1-mediated lytic viral reactivation. Interacts also with EBNA1; this interaction promotes EBNA1-dependent transcription. In terms of processing, O-glycosylated. Phosphorylated by SYK. This phosphorylation plays an important role in the abolition of BLIMP1 repression by PAX5 in order to trigger plasma cell differentiation.

It is found in the nucleus. Its function is as follows. Transcription factor that plays an essential role in commitment of lymphoid progenitors to the B-lymphocyte lineage. Fulfills a dual role by repressing B-lineage inappropriate genes and simultaneously activating B-lineage-specific genes. In turn, regulates cell adhesion and migration, induces V(H)-to-D(H)J(H) recombination, facilitates pre-B-cell receptor signaling and promotes development to the mature B-cell stage. Repression of the cohesin-release factor WAPL causes global changes of the chromosomal architecture in pro-B cells to facilitate the generation of a diverse antibody repertoire. Functionally, (Microbial infection) Plays an essential role in the maintenance of Epstein-Barr virus genome copy number within the host cell by promoting EBNA1/oriP-dependent binding and transcription. Also participates in the inhibition of lytic EBV reactivation by modulating viral BZLF1 activity. This is Paired box protein Pax-5 (PAX5) from Homo sapiens (Human).